A 337-amino-acid chain; its full sequence is DNA-directed RNA polymerase subunit alpha (337 aa).

Positions 1 to 226 (MLIAQRPTLT…ELFGLARELN (226 aa)) are alpha N-terminal domain (alpha-NTD). The tract at residues 243–337 (LAADLALEIE…DTSFAEDEQL (95 aa)) is alpha C-terminal domain (alpha-CTD). The tract at residues 315–337 (FDPSAVVNDFEDDDTSFAEDEQL) is disordered. Acidic residues predominate over residues 323-337 (DFEDDDTSFAEDEQL).

It belongs to the RNA polymerase alpha chain family. Homodimer. The RNAP catalytic core consists of 2 alpha, 1 beta, 1 beta' and 1 omega subunit. When a sigma factor is associated with the core the holoenzyme is formed, which can initiate transcription.

It carries out the reaction RNA(n) + a ribonucleoside 5'-triphosphate = RNA(n+1) + diphosphate. In terms of biological role, DNA-dependent RNA polymerase catalyzes the transcription of DNA into RNA using the four ribonucleoside triphosphates as substrates. In Kineococcus radiotolerans (strain ATCC BAA-149 / DSM 14245 / SRS30216), this protein is DNA-directed RNA polymerase subunit alpha.